The sequence spans 103 residues: Large ribosomal subunit protein uL24 (103 aa).

This sequence belongs to the universal ribosomal protein uL24 family. As to quaternary structure, part of the 50S ribosomal subunit.

Functionally, one of two assembly initiator proteins, it binds directly to the 5'-end of the 23S rRNA, where it nucleates assembly of the 50S subunit. In terms of biological role, one of the proteins that surrounds the polypeptide exit tunnel on the outside of the subunit. The protein is Large ribosomal subunit protein uL24 of Haemophilus influenzae (strain 86-028NP).